Here is a 907-residue protein sequence, read N- to C-terminus: HMG box transcription factor BBX (907 aa).

The span at 1 to 19 (MKGSNRNKDHSTEGEGDGK) shows a compositional bias: basic and acidic residues. Disordered regions lie at residues 1 to 24 (MKGSNRNKDHSTEGEGDGKRPKRK), 37 to 80 (LDFS…EQRA), 152 to 185 (TTNKPVKSPTPTVNPRKKLWAFPPDSSRDLPTPK), and 220 to 242 (TPEASSGTCRPDISESPELRQKS). Acidic residues-rich tracts occupy residues 39–52 (FSEEEEEDEEEEDI) and 61–75 (DGLEQDVAETEDDES). The segment at residues 80 to 148 (ARRPMNAFLL…AFMKANPGYR (69 aa)) is a DNA-binding region (HMG box). The span at 152 to 164 (TTNKPVKSPTPTV) shows a compositional bias: polar residues. Ser242 carries the phosphoserine modification. Lys384 is covalently cross-linked (Glycyl lysine isopeptide (Lys-Gly) (interchain with G-Cter in SUMO2)). Disordered stretches follow at residues 435 to 483 (IIED…DIES), 495 to 612 (DWGV…SERS), and 628 to 672 (TSLR…KKFK). A compositionally biased stretch (basic residues) spans 447–457 (KIKKKKKKNKL). Residues Ser476 and Ser483 each carry the phosphoserine modification. Basic and acidic residues-rich tracts occupy residues 496–506 (WGVDKLGETPR) and 534–550 (KKVSKEKCSDITKESRP). Lys571 is covalently cross-linked (Glycyl lysine isopeptide (Lys-Gly) (interchain with G-Cter in SUMO2)). Over residues 591 to 612 (KPEDSDCHRKTETCGSRKSERS) the composition is skewed to basic and acidic residues. Positions 656 to 668 (ESWTFNQSGTSGS) are enriched in polar residues. Lys693 is covalently cross-linked (Glycyl lysine isopeptide (Lys-Gly) (interchain with G-Cter in SUMO2)). The residue at position 701 (Ser701) is a Phosphoserine. Disordered stretches follow at residues 708 to 736 (KCVSTPRKKKKTGNMSSESTKTSKGSGDK), 769 to 854 (NALS…SSTP), and 877 to 907 (VHRGQRSTPLTHDGQPKEMPQAPVLISCADQ). The span at 723–732 (SSESTKTSKG) shows a compositional bias: low complexity. The span at 772–783 (SIPNTPEPTTMQ) shows a compositional bias: polar residues. The residue at position 789 (Ser789) is a Phosphoserine. Over residues 790–801 (QKRKARKTKITH) the composition is skewed to basic residues. Ser811 is modified (phosphoserine).

It is found in the nucleus. Its function is as follows. Transcription factor that is necessary for cell cycle progression from G1 to S phase. The chain is HMG box transcription factor BBX (Bbx) from Mus musculus (Mouse).